A 572-amino-acid polypeptide reads, in one-letter code: RNA polymerase sigma factor sigB (572 aa).

Residues 1–39 (MSSCLLPQFKCPPDSFSIHFRTSFCAPKHNKGSVFFQPQ) constitute a chloroplast transit peptide. The interval 215–249 (TRQTERKARRAKGLEKTASGIPSVKTGSSPKKKRL) is disordered. A Polymerase core binding motif is present at residues 360-373 (DLVQEGCRGLVRGA). Positions 530 to 549 (LQEIGEMMGVSRERVRQIES) form a DNA-binding region, H-T-H motif.

It belongs to the sigma-70 factor family. Highly expressed in cotyledons, to a lesser extent in leaves, sepals and siliques, and barely expressed in roots. Present in seedlings.

It localises to the plastid. It is found in the chloroplast. Functionally, required for the transition of plastids into chloroplasts by coordinating nuclear and chloroplastic genomes under light conditions. Sigma factors are initiation factors that promote the attachment of plastid-encoded RNA polymerase (PEP) to specific initiation sites and are then released. Promotes the biosynthesis of plastid-encoded tRNAs (e.g. trnE-UUC and trnV-UAC). The sequence is that of RNA polymerase sigma factor sigB (SIGB) from Arabidopsis thaliana (Mouse-ear cress).